Here is a 124-residue protein sequence, read N- to C-terminus: Small ribosomal subunit protein uS12 (124 aa).

Asp89 is subject to 3-methylthioaspartic acid.

Belongs to the universal ribosomal protein uS12 family. Part of the 30S ribosomal subunit. Contacts proteins S8 and S17. May interact with IF1 in the 30S initiation complex.

With S4 and S5 plays an important role in translational accuracy. Functionally, interacts with and stabilizes bases of the 16S rRNA that are involved in tRNA selection in the A site and with the mRNA backbone. Located at the interface of the 30S and 50S subunits, it traverses the body of the 30S subunit contacting proteins on the other side and probably holding the rRNA structure together. The combined cluster of proteins S8, S12 and S17 appears to hold together the shoulder and platform of the 30S subunit. This is Small ribosomal subunit protein uS12 from Klebsiella pneumoniae (strain 342).